The following is a 431-amino-acid chain: Tyrosine--tRNA ligase (431 aa).

An L-tyrosine-binding site is contributed by Y34. A 'HIGH' region motif is present at residues 39 to 48 (PTADSLHIGH). The L-tyrosine site is built by Y171 and Q175. The 'KMSKS' region signature appears at 231–235 (KFGKT). An ATP-binding site is contributed by K234. In terms of domain architecture, S4 RNA-binding spans 353-422 (INVVEALVKT…GKYTILRRGK (70 aa)).

Belongs to the class-I aminoacyl-tRNA synthetase family. TyrS type 1 subfamily. In terms of assembly, homodimer.

The protein resides in the cytoplasm. It catalyses the reaction tRNA(Tyr) + L-tyrosine + ATP = L-tyrosyl-tRNA(Tyr) + AMP + diphosphate + H(+). Functionally, catalyzes the attachment of tyrosine to tRNA(Tyr) in a two-step reaction: tyrosine is first activated by ATP to form Tyr-AMP and then transferred to the acceptor end of tRNA(Tyr). In Neisseria meningitidis serogroup A / serotype 4A (strain DSM 15465 / Z2491), this protein is Tyrosine--tRNA ligase.